Consider the following 301-residue polypeptide: 3-methyl-2-oxobutanoate hydroxymethyltransferase (301 aa).

Positions 1-12 are enriched in polar residues; sequence MAPSNLPESTTP. Positions 1–24 are disordered; it reads MAPSNLPESTTPAEVPAPYGTGPA. 2 residues coordinate Mg(2+): aspartate 82 and aspartate 121. 3-methyl-2-oxobutanoate is bound by residues 82 to 83, aspartate 121, and lysine 151; that span reads DS. Residue glutamate 153 coordinates Mg(2+). The Proton acceptor role is filled by glutamate 219.

It belongs to the PanB family. As to quaternary structure, homodecamer; pentamer of dimers. Mg(2+) serves as cofactor.

It is found in the cytoplasm. The enzyme catalyses 3-methyl-2-oxobutanoate + (6R)-5,10-methylene-5,6,7,8-tetrahydrofolate + H2O = 2-dehydropantoate + (6S)-5,6,7,8-tetrahydrofolate. Its pathway is cofactor biosynthesis; (R)-pantothenate biosynthesis; (R)-pantoate from 3-methyl-2-oxobutanoate: step 1/2. Functionally, catalyzes the reversible reaction in which hydroxymethyl group from 5,10-methylenetetrahydrofolate is transferred onto alpha-ketoisovalerate to form ketopantoate. The sequence is that of 3-methyl-2-oxobutanoate hydroxymethyltransferase from Paenarthrobacter aurescens (strain TC1).